An 85-amino-acid polypeptide reads, in one-letter code: Progonadoliberin-2 (85 aa).

Residues 1-23 (MCVSRLALLLGLLLCVGAQLSFA) form the signal peptide. Gln24 is subject to Pyrrolidone carboxylic acid. A Glycine amide modification is found at Gly33.

This sequence belongs to the GnRH family. Expressed in only one cell group in the mesencephalon.

It is found in the secreted. Functionally, stimulates the secretion of gonadotropins. The protein is Progonadoliberin-2 (gnrh2) of Haplochromis burtoni (Burton's mouthbrooder).